A 236-amino-acid chain; its full sequence is Purine nucleoside phosphorylase DeoD-type 2 (236 aa).

His5 lines the a purine D-ribonucleoside pocket. Residues Gly21, Arg25, Arg44, and 88 to 91 (RIGS) each bind phosphate. Residues 180 to 182 (DME) and 204 to 205 (SD) each bind a purine D-ribonucleoside. The active-site Proton donor is the Asp205.

Belongs to the PNP/UDP phosphorylase family. Homohexamer; trimer of homodimers.

The catalysed reaction is a purine D-ribonucleoside + phosphate = a purine nucleobase + alpha-D-ribose 1-phosphate. The enzyme catalyses a purine 2'-deoxy-D-ribonucleoside + phosphate = a purine nucleobase + 2-deoxy-alpha-D-ribose 1-phosphate. Functionally, catalyzes the reversible phosphorolytic breakdown of the N-glycosidic bond in the beta-(deoxy)ribonucleoside molecules, with the formation of the corresponding free purine bases and pentose-1-phosphate. The polypeptide is Purine nucleoside phosphorylase DeoD-type 2 (Vibrio cholerae serotype O1 (strain ATCC 39315 / El Tor Inaba N16961)).